Consider the following 214-residue polypeptide: Shikimate kinase (214 aa).

Residue 35–40 (GAGKST) participates in ATP binding. S39 contacts Mg(2+). Substrate-binding residues include D57, R81, and G103. Position 141 (R141) interacts with ATP. R160 contributes to the substrate binding site.

Belongs to the shikimate kinase family. In terms of assembly, monomer. It depends on Mg(2+) as a cofactor.

The protein resides in the cytoplasm. It carries out the reaction shikimate + ATP = 3-phosphoshikimate + ADP + H(+). The protein operates within metabolic intermediate biosynthesis; chorismate biosynthesis; chorismate from D-erythrose 4-phosphate and phosphoenolpyruvate: step 5/7. Its function is as follows. Catalyzes the specific phosphorylation of the 3-hydroxyl group of shikimic acid using ATP as a cosubstrate. This chain is Shikimate kinase, found in Nitrobacter winogradskyi (strain ATCC 25391 / DSM 10237 / CIP 104748 / NCIMB 11846 / Nb-255).